Reading from the N-terminus, the 407-residue chain is Queuine tRNA-ribosyltransferase-like protein (407 aa).

The protein belongs to the queuine tRNA-ribosyltransferase family.

The sequence is that of Queuine tRNA-ribosyltransferase-like protein from Plasmodium falciparum (isolate 3D7).